The primary structure comprises 266 residues: Norfluorocurarine synthase 2 (266 aa).

The 111-residue stretch at 11–121 (HFVLVHGAGH…VMPDSTHPPN (111 aa)) folds into the AB hydrolase-1 domain. Active-site residues include S86, D216, and H244.

The protein belongs to the AB hydrolase superfamily. As to quaternary structure, homodimer.

It catalyses the reaction 17-dehydropreakuammicine + H2O = norfluorocurarine + methanol + CO2. The protein operates within alkaloid biosynthesis. Functionally, hydrolase involved in the biosynthesis of curare monoterpene indole alkaloids (MIAs), natural products such as diaboline, a pharmacologically active compound used to regulate blood pressure. Curare alkaloids act as animal glycine receptor antagonists. Catalyzes the conversion of dehydropreakuammicine to norfluorocurarine. The protein is Norfluorocurarine synthase 2 of Strychnos sp.